The chain runs to 244 residues: 14-3-3 protein homolog 1 (244 aa).

The protein belongs to the 14-3-3 family.

This Echinococcus granulosus (Hydatid tapeworm) protein is 14-3-3 protein homolog 1.